The chain runs to 61 residues: Large ribosomal subunit protein uL30 (61 aa).

This sequence belongs to the universal ribosomal protein uL30 family. Part of the 50S ribosomal subunit.

The polypeptide is Large ribosomal subunit protein uL30 (Chlorobium phaeobacteroides (strain BS1)).